A 1615-amino-acid chain; its full sequence is Ras-responsive element-binding protein 1 (1615 aa).

The interval 1 to 44 is disordered; that stretch reads MMSAVMNVGKIAENGGTSQTVKSPSKSPAPNRIGRRNQETKEEK. A compositionally biased stretch (polar residues) spans 15–28; it reads GGTSQTVKSPSKSP. C2H2-type zinc fingers lie at residues 47-69, 78-100, and 106-128; these read YTCP…IRQH, HSCS…MLVH, and YKCS…MKIH. Positions 127–169 are disordered; the sequence is IHEKDPNSTASTTPPSPLKAKRLSSKRKFSQDAEMDREERTPA. The span at 145–154 shows a compositional bias: basic residues; that stretch reads KAKRLSSKRK. 3 consecutive C2H2-type zinc fingers follow at residues 189-211, 216-239, and 297-319; these read YHCP…METH, LRCD…AVIH, and FICE…TETH. The segment at 511 to 556 is disordered; sequence SAQQASPGCISPSLPPPPLRLIKNSVETSSNSHLSQPGAKSSPSSQ. Positions 535-549 are enriched in polar residues; the sequence is SVETSSNSHLSQPGA. C2H2-type zinc fingers lie at residues 622–644, 650–672, 732–754, and 763–788; these read YPCR…IRSH, YQCN…LRTH, TVCK…MRTH, and FECK…QHLH. Disordered regions lie at residues 1025–1044, 1058–1104, and 1123–1162; these read AADA…KSGN, DSNL…VDLE, and KFSP…KRNT. Over residues 1026 to 1036 the composition is skewed to low complexity; the sequence is ADASPKAASSS. Residues 1082-1095 are compositionally biased toward basic residues; the sequence is TKKRGRKKGTKNKP. The span at 1123 to 1132 shows a compositional bias: polar residues; it reads KFSPFLQSTD. The C2H2-type 11 zinc finger occupies 1170–1192; sequence ITCPYCPRVFSWASSLQRHMLTH. Disordered regions lie at residues 1214–1269 and 1313–1418; these read CEKE…KSLD and LSRH…DKRK. Residues 1242–1262 show a composition bias toward acidic residues; it reads PAEEDAEEKADEYEEGPEEDS. The segment at 1298-1320 adopts a C2H2-type 12 zinc-finger fold; it reads HACDVCGKTFKFAGALSRHKKAH. Composition is skewed to basic and acidic residues over residues 1321-1339 and 1388-1414; these read IRED…KSIQ and GTER…TAKA. C2H2-type zinc fingers lie at residues 1419-1441 and 1447-1469; these read KVCT…MRSH and YKCQ…QRIH. Positions 1464-1477 are enriched in basic residues; sequence RHQRIHQKVKNTRN. The interval 1464–1585 is disordered; the sequence is RHQRIHQKVK…SELERPSGFI (122 aa). Composition is skewed to basic and acidic residues over residues 1478–1493 and 1566–1580; these read HGKE…RCGE and PAKD…ELER.

It belongs to the krueppel C2H2-type zinc-finger protein family. As to expression, broadly expressed, except in brain.

Its subcellular location is the nucleus. Its function is as follows. Transcription factor that binds specifically to the RAS-responsive elements (RRE) of gene promoters. This Gallus gallus (Chicken) protein is Ras-responsive element-binding protein 1 (RREB1).